Reading from the N-terminus, the 446-residue chain is Probable D-serine dehydratase (446 aa).

Lysine 116 bears the N6-(pyridoxal phosphate)lysine mark.

The protein belongs to the serine/threonine dehydratase family. DsdA subfamily. It depends on pyridoxal 5'-phosphate as a cofactor.

The catalysed reaction is D-serine = pyruvate + NH4(+). The sequence is that of Probable D-serine dehydratase from Bacillus anthracis (strain CDC 684 / NRRL 3495).